A 140-amino-acid chain; its full sequence is Calcitonin (140 aa).

Positions 1 to 25 are cleaved as a signal peptide; sequence MGFWKFSPFLPLSILVLYQVGIIQA. A propeptide spanning residues 26–81 is cleaved from the precursor; sequence APFRSALESLPDPAVLPEEESRLLLAALVKDYVQMKVRALEQEQETGGASLDSPRA. The cysteines at positions 84 and 90 are disulfide-linked. Proline 115 is modified (proline amide). Positions 120–140 are excised as a propeptide; that stretch reads VMARGLERDHGPHIGTSQDAY.

The protein belongs to the calcitonin family.

It localises to the secreted. Functionally, calcitonin is a peptide hormone that causes a rapid but short-lived drop in the level of calcium and phosphate in blood by promoting the incorporation of those ions in the bones. Calcitonin function is mediated by the calcitonin receptor/CALCR and the CALCR-RAMP2 (AMYR2) receptor complex. The chain is Calcitonin (CALCA) from Equus caballus (Horse).